The primary structure comprises 80 residues: Acyl carrier protein (80 aa).

One can recognise a Carrier domain in the interval 4–79 (DEVKGQVYDI…DAINYIVEKK (76 aa)). The residue at position 39 (serine 39) is an O-(pantetheine 4'-phosphoryl)serine.

Belongs to the acyl carrier protein (ACP) family. In terms of processing, 4'-phosphopantetheine is transferred from CoA to a specific serine of apo-ACP by AcpS. This modification is essential for activity because fatty acids are bound in thioester linkage to the sulfhydryl of the prosthetic group.

It localises to the cytoplasm. It functions in the pathway lipid metabolism; fatty acid biosynthesis. In terms of biological role, carrier of the growing fatty acid chain in fatty acid biosynthesis. This Chloroherpeton thalassium (strain ATCC 35110 / GB-78) protein is Acyl carrier protein.